Reading from the N-terminus, the 403-residue chain is Vitamin D(3) 25-hydroxylase (403 aa).

Heme is bound at residue Cys-347.

It belongs to the cytochrome P450 family. It depends on heme as a cofactor.

Its subcellular location is the cytoplasm. It carries out the reaction 5beta-cholestane-3alpha,7alpha,12alpha-triol + 6 reduced [adrenodoxin] + 3 O2 + 5 H(+) = (25R)-3alpha,7alpha,12alpha-trihydroxy-5beta-cholestan-26-oate + 6 oxidized [adrenodoxin] + 4 H2O. Activated by partially methylated beta-cyclodextrin. In terms of biological role, hydroxylates vitamin D(3) into 25-hydroxyvitamin D(3) and 1-alpha,25-dihydroxyvitamin D(3), its physiologically active forms. It first hydroxylates the C-25 position of vitamin D(3) to form 25-hydroxyvitamin D(3), then subsequently hydroxylates the C-1-alpha position to form 1-alpha,25-dihydroxyvitamin D(3). Also displays 25-hydroxylase activity on vitamin D(2) and 7-dehydrocholesterol. May play a role in the biosynthesis of steroid metabolic intermediates. This Pseudonocardia autotrophica (Amycolata autotrophica) protein is Vitamin D(3) 25-hydroxylase.